Here is a 400-residue protein sequence, read N- to C-terminus: Signal recognition particle receptor FtsY (400 aa).

Disordered regions lie at residues 12-37 (TKKTNQVEQDEPILDQQDQQDQQEEQ) and 51-86 (NKIKKTKTSETKKQEKPIETLKEKKKREKQKEKDKK). The span at 51–72 (NKIKKTKTSETKKQEKPIETLK) shows a compositional bias: basic and acidic residues. GTP contacts are provided by residues 192–199 (GVNGTGKT), 278–282 (DTAGR), and 342–345 (TKMD).

The protein belongs to the GTP-binding SRP family. FtsY subfamily. As to quaternary structure, part of the signal recognition particle protein translocation system, which is composed of SRP and FtsY.

It is found in the cell membrane. The protein resides in the cytoplasm. It carries out the reaction GTP + H2O = GDP + phosphate + H(+). In terms of biological role, involved in targeting and insertion of nascent membrane proteins into the cytoplasmic membrane. Acts as a receptor for the complex formed by the signal recognition particle (SRP) and the ribosome-nascent chain (RNC). The sequence is that of Signal recognition particle receptor FtsY from Mycoplasma mycoides subsp. mycoides SC (strain CCUG 32753 / NCTC 10114 / PG1).